The primary structure comprises 286 residues: Pyridoxal kinase PdxY (286 aa).

Substrate contacts are provided by residues Ser9 and 44 to 45; that span reads TQ. ATP is bound by residues Asp111, Ala143, Glu148, Lys181, and 208-211; that span reads RPLV. Substrate is bound at residue Asp223.

Belongs to the pyridoxine kinase family. PdxY subfamily. In terms of assembly, homodimer. Mg(2+) serves as cofactor.

It carries out the reaction pyridoxal + ATP = pyridoxal 5'-phosphate + ADP + H(+). It functions in the pathway cofactor metabolism; pyridoxal 5'-phosphate salvage; pyridoxal 5'-phosphate from pyridoxal: step 1/1. In terms of biological role, pyridoxal kinase involved in the salvage pathway of pyridoxal 5'-phosphate (PLP). Catalyzes the phosphorylation of pyridoxal to PLP. This chain is Pyridoxal kinase PdxY, found in Salmonella paratyphi A (strain ATCC 9150 / SARB42).